The following is a 363-amino-acid chain: Phosphoserine aminotransferase (363 aa).

L-glutamate is bound at residue arginine 42. Residues 76-77 (GR), tryptophan 102, threonine 156, aspartate 175, and glutamine 198 each bind pyridoxal 5'-phosphate. Lysine 199 bears the N6-(pyridoxal phosphate)lysine mark. 240-241 (NT) contributes to the pyridoxal 5'-phosphate binding site.

Belongs to the class-V pyridoxal-phosphate-dependent aminotransferase family. SerC subfamily. As to quaternary structure, homodimer. The cofactor is pyridoxal 5'-phosphate.

The protein resides in the cytoplasm. The enzyme catalyses O-phospho-L-serine + 2-oxoglutarate = 3-phosphooxypyruvate + L-glutamate. The catalysed reaction is 4-(phosphooxy)-L-threonine + 2-oxoglutarate = (R)-3-hydroxy-2-oxo-4-phosphooxybutanoate + L-glutamate. The protein operates within amino-acid biosynthesis; L-serine biosynthesis; L-serine from 3-phospho-D-glycerate: step 2/3. Its pathway is cofactor biosynthesis; pyridoxine 5'-phosphate biosynthesis; pyridoxine 5'-phosphate from D-erythrose 4-phosphate: step 3/5. Its function is as follows. Catalyzes the reversible conversion of 3-phosphohydroxypyruvate to phosphoserine and of 3-hydroxy-2-oxo-4-phosphonooxybutanoate to phosphohydroxythreonine. The sequence is that of Phosphoserine aminotransferase from Shewanella sp. (strain ANA-3).